The following is a 514-amino-acid chain: 2,3-bisphosphoglycerate-independent phosphoglycerate mutase (514 aa).

The Mn(2+) site is built by D14 and S64. The active-site Phosphoserine intermediate is S64. Substrate is bound by residues H125, R155–D156, R187, R193, R263–R266, and K336. 5 residues coordinate Mn(2+): D403, H407, D444, H445, and H463.

It belongs to the BPG-independent phosphoglycerate mutase family. As to quaternary structure, monomer. Mn(2+) is required as a cofactor.

It carries out the reaction (2R)-2-phosphoglycerate = (2R)-3-phosphoglycerate. The protein operates within carbohydrate degradation; glycolysis; pyruvate from D-glyceraldehyde 3-phosphate: step 3/5. Catalyzes the interconversion of 2-phosphoglycerate and 3-phosphoglycerate. The polypeptide is 2,3-bisphosphoglycerate-independent phosphoglycerate mutase (Shewanella sp. (strain MR-4)).